The following is a 285-amino-acid chain: Nucleotide-binding protein PSPTO_4456 (285 aa).

An ATP-binding site is contributed by 8–15 (GRSGSGKS). A GTP-binding site is contributed by 60–63 (DARN).

The protein belongs to the RapZ-like family.

Displays ATPase and GTPase activities. This Pseudomonas syringae pv. tomato (strain ATCC BAA-871 / DC3000) protein is Nucleotide-binding protein PSPTO_4456.